The chain runs to 586 residues: MANAYERFNLHSTPEKFYIEACDDGADDVLVIDRVSTEMTLAGIKDIPPSGITRPICGVMGTVRLVAGMYLIVITRKRKVGDLFGHTVWKAVEFDVISYKKTILHLTDIQMQDNKTFLTMINNVLNTDGFYFCTDYDLTHTQQRLSNTSPDFQEMSLLERADQRFMWNGNLLREIIAQPELHKFAFPVIHGFIVMKPCCINGKVFEWIIISRRSCFRAGVRYYVRGIDSEGHAANFVETEQIVQFNNARASFVQTRGSIPFFWSQRPNLKYKPKPLISKDTNHMDGLRRHFESQVLIYGKQVILNLVNQKGSELPLEQAFAKMVSSMENGFIKYIAFDFHKECSKMRWHRLQILVDAVSDMQEEFGYFMVSSDGKVLSEQSGTFRSNCMDCLDRTNVIQSLLARRSLQSQLQRMGVLHVGQKIEEQADFEKIYKNAWADNANACAKQYAGTGALKTDFTRTGKRTHWGLVMDGWNSMIRYYKNNFSDGFRQDSIDLFLGNYSVDETDSLTPLHVKKDWKFLLLPVIMVVAFSMCIICLLMAGDTWTETLAYVLFWGMASALTAAVIVVNGREFVDAPKLVQKEKMD.

Topologically, residues 1–519 (MANAYERFNL…TPLHVKKDWK (519 aa)) are cytoplasmic. Residues 121 to 450 (INNVLNTDGF…ANACAKQYAG (330 aa)) form the SAC domain. Positions 451-586 (TGALKTDFTR…PKLVQKEKMD (136 aa)) are essential for phosphatidylinositol-4-phosphate phosphatase activity. Residues 520–540 (FLLLPVIMVVAFSMCIICLLM) form a helical membrane-spanning segment. The Lumenal segment spans residues 541-547 (AGDTWTE). The helical transmembrane segment at 548–568 (TLAYVLFWGMASALTAAVIVV) threads the bilayer. Residues 569 to 586 (NGREFVDAPKLVQKEKMD) lie on the Cytoplasmic side of the membrane.

It localises to the endoplasmic reticulum membrane. Its subcellular location is the golgi apparatus membrane. It carries out the reaction a 1,2-diacyl-sn-glycero-3-phospho-(1D-myo-inositol-3-phosphate) + H2O = a 1,2-diacyl-sn-glycero-3-phospho-(1D-myo-inositol) + phosphate. The catalysed reaction is a 1,2-diacyl-sn-glycero-3-phospho-(1D-myo-inositol 4-phosphate) + H2O = a 1,2-diacyl-sn-glycero-3-phospho-(1D-myo-inositol) + phosphate. Its function is as follows. Phosphoinositide phosphatase which catalyzes the hydrolysis of phosphatidylinositol 4-phosphate (PtdIns(4)P), phosphatidylinositol 3-phosphate (PtdIns(3)P) and has low activity towards phosphatidylinositol-3,5-bisphosphate (PtdIns(3,5)P2). This is Phosphatidylinositol-3-phosphatase SAC1-A (sacm1la) from Danio rerio (Zebrafish).